A 393-amino-acid chain; its full sequence is MWWRVLSLLAWFPLQEASLTNHTETITVEEGQTLTLKCVTSLRKNSSLQWLTPSGFTIFLNEYPALKNSKYQLLHHSANQLSITVPNVTLQDEGVYKCLHYSDSVSTKEVKVIVLATPFKPILEASVIRKQNGEEHVVLMCSTMRSKPPPQITWLLGNSMEVSGGTLHEFETDGKKCNTTSTLIIHTYGKNSTVDCIIRHRGLQGRKLVAPFRFEDLVTDEETASDALERNSLSSQDPQQPTSTVSVTEDSSTSEIDKEEKEQTTQDPDLTTEANPQYLGLARKKSGILLLTLVSFLIFILFIIVQLFIMKLRKAHVIWKKENEVSEHTLESYRSRSNNEETSSEEKNGQSSHPMRCMNYITKLYSEAKTKRKENVQHSKLEEKHIQVPESIV.

The signal sequence occupies residues 1–17; that stretch reads MWWRVLSLLAWFPLQEA. An Ig-like V-type domain is found at 18 to 114; it reads SLTNHTETIT…VSTKEVKVIV (97 aa). Topologically, residues 18–287 are extracellular; sequence SLTNHTETIT…YLGLARKKSG (270 aa). N-linked (GlcNAc...) asparagine glycans are attached at residues asparagine 21, asparagine 87, and asparagine 178. 2 cysteine pairs are disulfide-bonded: cysteine 38–cysteine 98 and cysteine 141–cysteine 196. The region spanning 118–210 is the Ig-like C2-type domain; the sequence is PFKPILEASV…RGLQGRKLVA (93 aa). Positions 225-273 are disordered; sequence SDALERNSLSSQDPQQPTSTVSVTEDSSTSEIDKEEKEQTTQDPDLTTE. The span at 231–241 shows a compositional bias: polar residues; the sequence is NSLSSQDPQQP. Over residues 242–254 the composition is skewed to low complexity; it reads TSTVSVTEDSSTS. Residues 255–264 show a composition bias toward basic and acidic residues; the sequence is EIDKEEKEQT. Residues 288-308 traverse the membrane as a helical segment; sequence ILLLTLVSFLIFILFIIVQLF. Residues 309–393 lie on the Cytoplasmic side of the membrane; it reads IMKLRKAHVI…KHIQVPESIV (85 aa). 2 stretches are compositionally biased toward basic and acidic residues: residues 328–348 and 374–387; these read HTLESYRSRSNNEETSSEEKN and ENVQHSKLEEKHIQ. Disordered regions lie at residues 328 to 354 and 374 to 393; these read HTLESYRSRSNNEETSSEEKNGQSSHP and ENVQHSKLEEKHIQVPESIV. The short motif at 390-393 is the PDZ-binding element; the sequence is ESIV.

This sequence belongs to the nectin family. As to quaternary structure, monomer. May form homodimer (via Ig-like V-type domain). Interacts (via Ig-like V-type domain) with CADM1 (via Ig-like V-type domain); the interaction competes with CRTAM homodimerization and CADM1 homodimerization. Interacts (via PDZ-binding motif) with SCRIB (via PDZ domain 3); the interaction promotes CRTAM and SCRIB polarization in a subset of CD4+ T-cells. In terms of tissue distribution, in the immune system, expression is restricted to activated class-I MHC-restricted cells, including NKT and CD8 T-cells. Strongly expressed in spleen, thymus, small intestine, peripheral blood leukocyte, and in Purkinje neurons in cerebellum. Expressed at much lower levels in testis, ovary, colon, lung and lymphoid tissues.

The protein resides in the cell membrane. Functionally, mediates heterophilic cell-cell adhesion which regulates the activation, differentiation and tissue retention of various T-cell subsets. Interaction with CADM1 promotes natural killer (NK) cell cytotoxicity and IFNG/interferon-gamma secretion by CD8+ T-cells in vitro as well as NK cell-mediated rejection of tumors expressing CADM1 in vivo. Regulates CD8+ T-cell proliferation in response to T-cell receptor (TCR) activation. Appears to be dispensable for CD8+ T-cell-mediated cytotoxicity. Interaction with SCRIB promotes the late phase of cellular polarization of a subset of CD4+ T-cells, which in turn regulates TCR-mediated proliferation and IFNG, IL17 and IL22 production. By interacting with CADM1 on CD8+ dendritic cells, regulates the retention of activated CD8+ T-cells within the draining lymph node. Required for the intestinal retention of intraepithelial CD4+ CD8+ T-cells and, to a lesser extent, intraepithelial and lamina propria CD8+ T-cells and CD4+ T-cells. Interaction with CADM1 promotes the adhesion to gut-associated CD103+ dendritic cells, which may facilitate the expression of gut-homing and adhesion molecules on T-cells and the conversion of CD4+ T-cells into CD4+ CD8+ T-cells. This chain is Cytotoxic and regulatory T-cell molecule, found in Homo sapiens (Human).